A 393-amino-acid polypeptide reads, in one-letter code: Zinc finger CCCH domain-containing protein 2 (393 aa).

The interval 1–71 (MDVVCTEHQM…NRENKEYCYD (71 aa)) is disordered. A compositionally biased stretch (low complexity) spans 20 to 37 (RKLLLSSKSFPSDSSSPR). Residues 60-69 (DNNRENKEYC) show a composition bias toward basic and acidic residues. C3H1-type zinc fingers lie at residues 122-150 (QYSGEVCPEFRRGGDCSRGDDCEFAHGVF) and 159-181 (YRTEACKDGKHCKRKVCFFAHSP).

Interacts with MARD1/FLZ9 and RD21A. Specifically expressed in seeds.

The protein resides in the nucleus. Its function is as follows. Probable transcription repressor that functions as a negative regulator of phytochrome-mediated promotion of seed germination. Inhibits seed germination by regulating the expression of gibberellic acid (GA) and abscisic acid (ABA) metabolic genes. Does not regulate the expression of the DELLA genes RGA and RGA1. Activated by PIL5, a phytochrome-interacting basic helix-loop-helix transcription factor. Represses directly JMJ20 and JMJ22 expression in the absence of red light (R) and in far-red (FR) conditions. The polypeptide is Zinc finger CCCH domain-containing protein 2 (Arabidopsis thaliana (Mouse-ear cress)).